The chain runs to 28 residues: Dolichyl-diphosphooligosaccharide--protein glycosyltransferase subunit 1 (28 aa).

It belongs to the OST1 family. As to quaternary structure, component of the oligosaccharyltransferase (OST) complex.

Its subcellular location is the endoplasmic reticulum membrane. Its pathway is protein modification; protein glycosylation. Its function is as follows. Subunit of the oligosaccharyl transferase (OST) complex that catalyzes the initial transfer of a defined glycan (Glc(3)Man(9)GlcNAc(2) in eukaryotes) from the lipid carrier dolichol-pyrophosphate to an asparagine residue within an Asn-X-Ser/Thr consensus motif in nascent polypeptide chains, the first step in protein N-glycosylation. N-glycosylation occurs cotranslationally and the complex associates with the Sec61 complex at the channel-forming translocon complex that mediates protein translocation across the endoplasmic reticulum (ER). All subunits are required for a maximal enzyme activity. The protein is Dolichyl-diphosphooligosaccharide--protein glycosyltransferase subunit 1 of Gallus gallus (Chicken).